A 402-amino-acid polypeptide reads, in one-letter code: Aminotransferase-like protein FGM3 (402 aa).

Residues 137–138 (TI), Asp218, and 282–283 (FG) each bind pyridoxal 5'-phosphate.

The protein belongs to the class-V pyridoxal-phosphate-dependent aminotransferase family. Csd subfamily.

Functionally, aminotransferase-like protein; part of the Fg3_54/C64 gene cluster that mediates the biosynthesis of the octapeptide fusaoctaxin A, a virulence factor that is required for cell-to-cell invasiveness of plant host. The 2 nonribosomal peptide synthetases NRPS9 and NRPS5 form an assembly line which likely utilizes GABA as a starter unit (loaded on the unique module M1 of NRPS9) and sequentially incorporates seven extender units composed of the residues L-Ala, L-allo-Ile, L-Ser, L-Val, L-Ser, L-Leu and L-Leu, respectively. During the process, each of the residues that are tethered on modules M3-M7 of NRPS5 containing an E domain can undergo an epimerization reaction to produce a D-configuration before the transpeptidation reaction occurs. The elongation of the peptidyl chain might be terminated by module M8-mediated L-Leu incorporation, followed by R domain-catalyzed 4 electron reduction to release the resulting octapeptide from the assembly line as an alcohol. Fusaoctaxin A is cleaved by the cluster specific ABC transporter FGM5 to the pentapeptide fusapentaxin A and the tripeptide fusatrixin A. The other enzymes from the cluster, FGM1, FGM2, FGM3 and FGM9 seem not to be involved in the biosynthesis of fusaoctaxin A and their functions have still to be determined. The sequence is that of Aminotransferase-like protein FGM3 from Gibberella zeae (strain ATCC MYA-4620 / CBS 123657 / FGSC 9075 / NRRL 31084 / PH-1) (Wheat head blight fungus).